The following is a 583-amino-acid chain: DNA ligase (583 aa).

Glutamate 249 provides a ligand contact to ATP. Lysine 251 (N6-AMP-lysine intermediate) is an active-site residue. ATP is bound by residues arginine 256, arginine 271, glutamate 301, phenylalanine 341, arginine 416, and lysine 422.

It belongs to the ATP-dependent DNA ligase family. The cofactor is Mg(2+).

It catalyses the reaction ATP + (deoxyribonucleotide)n-3'-hydroxyl + 5'-phospho-(deoxyribonucleotide)m = (deoxyribonucleotide)n+m + AMP + diphosphate.. Its function is as follows. DNA ligase that seals nicks in double-stranded DNA during DNA replication, DNA recombination and DNA repair. The sequence is that of DNA ligase from Pyrobaculum calidifontis (strain DSM 21063 / JCM 11548 / VA1).